Reading from the N-terminus, the 330-residue chain is Aspartate--ammonia ligase (330 aa).

Belongs to the class-II aminoacyl-tRNA synthetase family. AsnA subfamily.

It localises to the cytoplasm. It catalyses the reaction L-aspartate + NH4(+) + ATP = L-asparagine + AMP + diphosphate + H(+). Its pathway is amino-acid biosynthesis; L-asparagine biosynthesis; L-asparagine from L-aspartate (ammonia route): step 1/1. The chain is Aspartate--ammonia ligase from Streptococcus equi subsp. equi (strain 4047).